A 130-amino-acid polypeptide reads, in one-letter code: ATP synthase epsilon chain (130 aa).

This sequence belongs to the ATPase epsilon chain family. As to quaternary structure, F-type ATPases have 2 components, CF(1) - the catalytic core - and CF(0) - the membrane proton channel. CF(1) has five subunits: alpha(3), beta(3), gamma(1), delta(1), epsilon(1). CF(0) has three main subunits: a, b and c.

The protein localises to the cell membrane. In terms of biological role, produces ATP from ADP in the presence of a proton gradient across the membrane. This Nocardia farcinica (strain IFM 10152) protein is ATP synthase epsilon chain.